The chain runs to 204 residues: phospholipase A2 inhibitor and Ly6/PLAUR domain-containing protein (204 aa).

The first 26 residues, 1–26, serve as a signal peptide directing secretion; the sequence is MRLSRRPETFLLAFVLLCTLLGLGCP. In terms of domain architecture, UPAR/Ly6 spans 27–117; the sequence is LHCEICTAAG…NSAFLSVPLT (91 aa). Intrachain disulfides connect Cys29/Cys53, Cys32/Cys39, Cys46/Cys74, Cys80/Cys101, Cys102/Cys107, Cys126/Cys151, and Cys144/Cys172.

Belongs to the CNF-like-inhibitor family.

The protein resides in the secreted. In Homo sapiens (Human), this protein is phospholipase A2 inhibitor and Ly6/PLAUR domain-containing protein (PINLYP).